A 208-amino-acid chain; its full sequence is Thymidylate kinase (208 aa).

Residue 10–17 (GPEGSGKT) coordinates ATP.

It belongs to the thymidylate kinase family.

The catalysed reaction is dTMP + ATP = dTDP + ADP. In terms of biological role, phosphorylation of dTMP to form dTDP in both de novo and salvage pathways of dTTP synthesis. In Bacillus cereus (strain Q1), this protein is Thymidylate kinase.